We begin with the raw amino-acid sequence, 24 residues long: Cytochrome c oxidase subunit 5A-2, mitochondrial (24 aa).

Belongs to the cytochrome c oxidase subunit 5A family. As to quaternary structure, component of the cytochrome c oxidase (complex IV, CIV), a multisubunit enzyme composed of 14 subunits. The complex is composed of a catalytic core of 3 subunits MT-CO1, MT-CO2 and MT-CO3, encoded in the mitochondrial DNA, and 11 supernumerary subunits COX4I, COX5A, COX5B, COX6A, COX6B, COX6C, COX7A, COX7B, COX7C, COX8 and NDUFA4, which are encoded in the nuclear genome. The complex exists as a monomer or a dimer and forms supercomplexes (SCs) in the inner mitochondrial membrane with NADH-ubiquinone oxidoreductase (complex I, CI) and ubiquinol-cytochrome c oxidoreductase (cytochrome b-c1 complex, complex III, CIII), resulting in different assemblies (supercomplex SCI(1)III(2)IV(1) and megacomplex MCI(2)III(2)IV(2)).

Its subcellular location is the mitochondrion inner membrane. It participates in energy metabolism; oxidative phosphorylation. Its function is as follows. Component of the cytochrome c oxidase, the last enzyme in the mitochondrial electron transport chain which drives oxidative phosphorylation. The respiratory chain contains 3 multisubunit complexes succinate dehydrogenase (complex II, CII), ubiquinol-cytochrome c oxidoreductase (cytochrome b-c1 complex, complex III, CIII) and cytochrome c oxidase (complex IV, CIV), that cooperate to transfer electrons derived from NADH and succinate to molecular oxygen, creating an electrochemical gradient over the inner membrane that drives transmembrane transport and the ATP synthase. Cytochrome c oxidase is the component of the respiratory chain that catalyzes the reduction of oxygen to water. Electrons originating from reduced cytochrome c in the intermembrane space (IMS) are transferred via the dinuclear copper A center (CU(A)) of subunit 2 and heme A of subunit 1 to the active site in subunit 1, a binuclear center (BNC) formed by heme A3 and copper B (CU(B)). The BNC reduces molecular oxygen to 2 water molecules using 4 electrons from cytochrome c in the IMS and 4 protons from the mitochondrial matrix. This is Cytochrome c oxidase subunit 5A-2, mitochondrial from Thunnus obesus (Bigeye tuna).